A 136-amino-acid chain; its full sequence is Small ribosomal subunit protein uS19 (136 aa).

Belongs to the universal ribosomal protein uS19 family.

In terms of biological role, protein S19 forms a complex with S13 that binds strongly to the 16S ribosomal RNA. The sequence is that of Small ribosomal subunit protein uS19 from Methanosarcina mazei (strain ATCC BAA-159 / DSM 3647 / Goe1 / Go1 / JCM 11833 / OCM 88) (Methanosarcina frisia).